The sequence spans 236 residues: Thiamine import ATP-binding protein ThiQ (236 aa).

The region spanning 2-230 (LKLEKITYLY…SAAKASVLGI (229 aa)) is the ABC transporter domain. ATP is bound at residue 32-39 (GPSGAGKS).

The protein belongs to the ABC transporter superfamily. Thiamine importer (TC 3.A.1.19.1) family. In terms of assembly, the complex is composed of two ATP-binding proteins (ThiQ), two transmembrane proteins (ThiP) and a solute-binding protein (ThiB).

Its subcellular location is the cell inner membrane. The enzyme catalyses thiamine(out) + ATP + H2O = thiamine(in) + ADP + phosphate + H(+). Functionally, part of the ABC transporter complex ThiBPQ involved in thiamine import. Responsible for energy coupling to the transport system. This Yersinia pestis bv. Antiqua (strain Antiqua) protein is Thiamine import ATP-binding protein ThiQ.